We begin with the raw amino-acid sequence, 309 residues long: 4-hydroxy-3-methylbut-2-enyl diphosphate reductase (309 aa).

Cysteine 12 contacts [4Fe-4S] cluster. Histidine 41 and histidine 74 together coordinate (2E)-4-hydroxy-3-methylbut-2-enyl diphosphate. Histidine 41 and histidine 74 together coordinate dimethylallyl diphosphate. Isopentenyl diphosphate contacts are provided by histidine 41 and histidine 74. Residue cysteine 96 participates in [4Fe-4S] cluster binding. Residue histidine 124 coordinates (2E)-4-hydroxy-3-methylbut-2-enyl diphosphate. Histidine 124 serves as a coordination point for dimethylallyl diphosphate. Position 124 (histidine 124) interacts with isopentenyl diphosphate. The Proton donor role is filled by glutamate 126. Threonine 167 contributes to the (2E)-4-hydroxy-3-methylbut-2-enyl diphosphate binding site. Residue cysteine 197 coordinates [4Fe-4S] cluster. 4 residues coordinate (2E)-4-hydroxy-3-methylbut-2-enyl diphosphate: serine 225, serine 226, asparagine 227, and serine 269. Dimethylallyl diphosphate is bound by residues serine 225, serine 226, asparagine 227, and serine 269. Isopentenyl diphosphate is bound by residues serine 225, serine 226, asparagine 227, and serine 269.

Belongs to the IspH family. It depends on [4Fe-4S] cluster as a cofactor.

It carries out the reaction isopentenyl diphosphate + 2 oxidized [2Fe-2S]-[ferredoxin] + H2O = (2E)-4-hydroxy-3-methylbut-2-enyl diphosphate + 2 reduced [2Fe-2S]-[ferredoxin] + 2 H(+). The catalysed reaction is dimethylallyl diphosphate + 2 oxidized [2Fe-2S]-[ferredoxin] + H2O = (2E)-4-hydroxy-3-methylbut-2-enyl diphosphate + 2 reduced [2Fe-2S]-[ferredoxin] + 2 H(+). It functions in the pathway isoprenoid biosynthesis; dimethylallyl diphosphate biosynthesis; dimethylallyl diphosphate from (2E)-4-hydroxy-3-methylbutenyl diphosphate: step 1/1. It participates in isoprenoid biosynthesis; isopentenyl diphosphate biosynthesis via DXP pathway; isopentenyl diphosphate from 1-deoxy-D-xylulose 5-phosphate: step 6/6. Its function is as follows. Catalyzes the conversion of 1-hydroxy-2-methyl-2-(E)-butenyl 4-diphosphate (HMBPP) into a mixture of isopentenyl diphosphate (IPP) and dimethylallyl diphosphate (DMAPP). Acts in the terminal step of the DOXP/MEP pathway for isoprenoid precursor biosynthesis. In Shewanella halifaxensis (strain HAW-EB4), this protein is 4-hydroxy-3-methylbut-2-enyl diphosphate reductase.